The chain runs to 314 residues: Trimethylamine N-oxide-binding protein (314 aa).

A signal peptide spans 1 to 24 (MKKIVSLMSALVISVVSFAGISNA). The trimethylamine N-oxide site is built by W38, W85, E114, W164, and W212.

As to quaternary structure, the complex is probably composed of two ATP-binding proteins (TmoW), two transmembrane proteins (TmoV) and a solute-binding protein (TmoX).

The protein localises to the periplasm. Part of the ABC transporter complex TmoXWV involved in trimethylamine N-oxide (TMAO) import. Possesses a high binding affinity toward TMAO, but presents little binding affinity toward betaine, carnitine, trimethylamine (TMA) or dimethylamine (DMA). The chain is Trimethylamine N-oxide-binding protein from Pelagibacter ubique (strain HTCC1062).